We begin with the raw amino-acid sequence, 122 residues long: Uterine plasmin/trypsin inhibitor (122 aa).

Residues Met-1–Ser-20 form the signal peptide. A propeptide spanning residues Thr-21 to Leu-29 is cleaved from the precursor. The region spanning Cys-38–Cys-88 is the BPTI/Kunitz inhibitor domain. 3 disulfides stabilise this stretch: Cys-38/Cys-88, Cys-47/Cys-71, and Cys-63/Cys-84.

As to expression, expressed only in the uterus and the endometrium.

Inhibitor of plasmin and trypsin. Also has a weak affinity for chymotrypsin. Could serve to neutralize the activities of one or more serine proteinases generated by the proliferating trophoblast during the formation of the noninvasive placenta. The sequence is that of Uterine plasmin/trypsin inhibitor from Sus scrofa (Pig).